Consider the following 144-residue polypeptide: F420-non-reducing hydrogenase vhc iron-sulfur subunit D (144 aa).

The protein belongs to the MvhD/VhuD family. In terms of assembly, the F420-non-reducing hydrogenase vhc is composed of three subunits; VhcA, VhcD and VhcG. Requires [2Fe-2S] cluster as cofactor.

In Methanococcus voltae, this protein is F420-non-reducing hydrogenase vhc iron-sulfur subunit D (vhcD).